The sequence spans 140 residues: Sex-regulated protein janus-B (140 aa).

Arginine 42 contributes to the substrate binding site. Histidine 69 serves as the catalytic Proton acceptor. 110–112 (SRT) lines the substrate pocket.

Belongs to the janus family.

Functionally, janA and janB regulate somatic sex differentiation. The protein is Sex-regulated protein janus-B (janB) of Drosophila erecta (Fruit fly).